We begin with the raw amino-acid sequence, 121 residues long: Large-conductance mechanosensitive channel (121 aa).

A run of 2 helical transmembrane segments spans residues valine 14 to leucine 34 and glycine 67 to isoleucine 87.

It belongs to the MscL family. Homopentamer.

The protein localises to the cell membrane. Its function is as follows. Channel that opens in response to stretch forces in the membrane lipid bilayer. May participate in the regulation of osmotic pressure changes within the cell. This chain is Large-conductance mechanosensitive channel, found in Lactococcus lactis subsp. cremoris (strain SK11).